The primary structure comprises 280 residues: Equatorin (280 aa).

The N-terminal stretch at 1–19 (MDFILLIFLSGVFLPNIFS) is a signal peptide. Over 20-183 (LQPTVEQDPG…LSELEEIKLK (164 aa)) the chain is Vesicular. The segment at 112–131 (ATASGEEDKRSEPSRKSSTP) is disordered. Positions 117 to 126 (EEDKRSEPSR) are enriched in basic and acidic residues. N-linked (GlcNAc...) asparagine glycosylation occurs at Asn-145. Residues 184–204 (LMLGISLMTLILLIPLLIFCF) traverse the membrane as a helical segment. The Cytoplasmic portion of the chain corresponds to 205–280 (ATLYKLRHLR…AEVTEERISE (76 aa)). At Ser-279 the chain carries Phosphoserine.

As to quaternary structure, interacts with SNAP25. Post-translationally, highly N- and O-glycosylated; contains sialic acid. Highly expressed in testis and epididymis. Low expression in other tissues.

The protein localises to the cytoplasmic vesicle. Its subcellular location is the secretory vesicle. It localises to the acrosome membrane. It is found in the acrosome inner membrane. The protein resides in the acrosome outer membrane. Its function is as follows. Acrosomal membrane-anchored protein involved in the process of fertilization and in acrosome biogenesis. In Rattus norvegicus (Rat), this protein is Equatorin (Eqtn).